The chain runs to 61 residues: MTEVKVKKGESIDKALRRLKRKLDREGTLREARLRKAFEKPCNRRRRKAKEARLKLYSSLY.

It belongs to the bacterial ribosomal protein bS21 family.

The polypeptide is Small ribosomal subunit protein bS21 (Methylacidiphilum infernorum (isolate V4) (Methylokorus infernorum (strain V4))).